Consider the following 717-residue polypeptide: Fatty acid oxidation complex subunit alpha (717 aa).

The interval 1-190 (MIHAGNAITV…KDGAVDAVVS (190 aa)) is enoyl-CoA hydratase/isomerase. Residue Asp298 participates in substrate binding. The interval 313–717 (HPVNQAAVLG…MAENNKKFYG (405 aa)) is 3-hydroxyacyl-CoA dehydrogenase. NAD(+) is bound by residues Met326, Asp345, 402–404 (VTE), Lys409, and Ser431. His452 acts as the For 3-hydroxyacyl-CoA dehydrogenase activity in catalysis. Asn455 is an NAD(+) binding site. A substrate-binding site is contributed by Asn502.

The protein in the N-terminal section; belongs to the enoyl-CoA hydratase/isomerase family. This sequence in the C-terminal section; belongs to the 3-hydroxyacyl-CoA dehydrogenase family. In terms of assembly, heterotetramer of two alpha chains (FadB) and two beta chains (FadA).

It carries out the reaction a (3S)-3-hydroxyacyl-CoA + NAD(+) = a 3-oxoacyl-CoA + NADH + H(+). It catalyses the reaction a (3S)-3-hydroxyacyl-CoA = a (2E)-enoyl-CoA + H2O. The catalysed reaction is a 4-saturated-(3S)-3-hydroxyacyl-CoA = a (3E)-enoyl-CoA + H2O. The enzyme catalyses (3S)-3-hydroxybutanoyl-CoA = (3R)-3-hydroxybutanoyl-CoA. It carries out the reaction a (3Z)-enoyl-CoA = a 4-saturated (2E)-enoyl-CoA. It catalyses the reaction a (3E)-enoyl-CoA = a 4-saturated (2E)-enoyl-CoA. Its pathway is lipid metabolism; fatty acid beta-oxidation. Its function is as follows. Involved in the aerobic and anaerobic degradation of long-chain fatty acids via beta-oxidation cycle. Catalyzes the formation of 3-oxoacyl-CoA from enoyl-CoA via L-3-hydroxyacyl-CoA. It can also use D-3-hydroxyacyl-CoA and cis-3-enoyl-CoA as substrate. The polypeptide is Fatty acid oxidation complex subunit alpha (Acinetobacter baylyi (strain ATCC 33305 / BD413 / ADP1)).